A 141-amino-acid chain; its full sequence is Large ribosomal subunit protein uL11 (141 aa).

The protein belongs to the universal ribosomal protein uL11 family. In terms of assembly, part of the ribosomal stalk of the 50S ribosomal subunit. Interacts with L10 and the large rRNA to form the base of the stalk. L10 forms an elongated spine to which L12 dimers bind in a sequential fashion forming a multimeric L10(L12)X complex. One or more lysine residues are methylated.

Functionally, forms part of the ribosomal stalk which helps the ribosome interact with GTP-bound translation factors. The chain is Large ribosomal subunit protein uL11 from Prochlorococcus marinus (strain MIT 9515).